We begin with the raw amino-acid sequence, 2694 residues long: Teneurin-3 (2694 aa).

Disordered stretches follow at residues 1 to 45, 106 to 132, and 161 to 198; these read MDVK…SSSE, PSSL…DNQS, and TQPA…PSVT. The Teneurin N-terminal domain occupies 1-306; it reads MDVKERRPYC…KSSKYCSWRC (306 aa). Topologically, residues 1–312 are cytoplasmic; the sequence is MDVKERRPYC…SWRCTALSAM (312 aa). Over residues 163–184 the composition is skewed to polar residues; that stretch reads PAPSHSCNEQPSNQHQQGQSTL. The helical transmembrane segment at 313 to 333 threads the bilayer; sequence AVSILLSVLLCYCIAMHLFGL. Residues 334 to 2694 are Extracellular-facing; the sequence is NWQLQETEGY…FLRQSEIGKR (2361 aa). Asparagine 374 and asparagine 413 each carry an N-linked (GlcNAc...) asparagine glycan. EGF-like domains lie at 508–539, 540–570, 572–604, 605–636, 638–671, 672–703, 704–733, and 734–768; these read TLTE…PDCS, RAAC…TECD, PSNQ…DNCE, EVDC…NNCE, LKTM…PDCS, IEVC…VCDL, KACH…EHCT, and VEGC…AGCD. Intrachain disulfides connect cysteine 512-cysteine 522, cysteine 516-cysteine 527, cysteine 529-cysteine 538, cysteine 547-cysteine 558, cysteine 560-cysteine 569, cysteine 576-cysteine 587, cysteine 581-cysteine 592, cysteine 594-cysteine 603, cysteine 608-cysteine 619, cysteine 613-cysteine 624, cysteine 626-cysteine 635, cysteine 646-cysteine 659, cysteine 661-cysteine 670, cysteine 675-cysteine 685, cysteine 679-cysteine 690, cysteine 692-cysteine 701, cysteine 706-cysteine 716, cysteine 710-cysteine 721, cysteine 723-cysteine 732, cysteine 737-cysteine 747, cysteine 741-cysteine 756, and cysteine 758-cysteine 767. A glycan (N-linked (GlcNAc...) asparagine) is linked at asparagine 664. 3 N-linked (GlcNAc...) asparagine glycosylation sites follow: asparagine 854, asparagine 877, and asparagine 1048. 5 NHL repeats span residues 1166-1192, 1194-1238, 1264-1308, 1325-1365, and 1452-1495; these read LLAP…RRIF, SGNV…PKAL, ARCG…NGII, CDNS…ITEN, and CYQT…IRHN. Asparagine 1196 is a glycosylation site (N-linked (GlcNAc...) asparagine). Residues 1505 to 1524 form a YD 1 repeat; the sequence is FEVASPASQELYVFDSNGTH. N-linked (GlcNAc...) asparagine glycosylation is found at asparagine 1521 and asparagine 1538. YD repeat units lie at residues 1541-1561, 1604-1623, and 1624-1646; these read YSNE…LRVR, YHGN…WTTF, and YDYD…TSLI. Asparagine 1634, asparagine 1671, asparagine 1729, and asparagine 1814 each carry an N-linked (GlcNAc...) asparagine glycan. YD repeat units follow at residues 1817–1836, 1858–1876, 1877–1897, 1904–1921, 1922–1943, 1944–1961, 1964–1984, 1987–2007, 2015–2034, 2040–2057, 2058–2084, 2086–2099, 2100–2123, 2126–2146, 2147–2167, 2169–2189, 2201–2221, and 2223–2243; these read YSST…ERVE, YLDK…YIFD, YDLQ…HTMQ, YYRN…VTVD, YSED…VLYK, YRRQ…TRVS, YDET…FICS, YRQI…DGMV, YDNS…TPLP, FDDI…GVIY, YDIN…IKEI, YEIF…ITIQ, YDNM…TKYG, YDVD…WRYN, YDLN…LTPL, YDLR…DEDG, YNSK…TIQY, and YDGL…LQFF. Residue asparagine 1915 is glycosylated (N-linked (GlcNAc...) asparagine). Asparagine 2118 carries N-linked (GlcNAc...) asparagine glycosylation. N-linked (GlcNAc...) asparagine glycosylation occurs at asparagine 2258. The stretch at 2269-2310 is one YD 23 repeat; the sequence is YDLQGHLFAMEISSGEEFYIACDNTGTPLAVFSSNGLLLKQV. Asparagine 2571 is a glycosylation site (N-linked (GlcNAc...) asparagine).

It belongs to the tenascin family. Teneurin subfamily. In terms of assembly, homodimer; disulfide-linked; to mediate homophilic cell adhesion. Expressed by retinal ganglion cells and their presynaptic amacrine and postsynaptic tectal cell targets.

The protein resides in the cell membrane. The protein localises to the cell projection. It is found in the axon. Involved in neural development by regulating the establishment of proper connectivity within the nervous system. Acts in both pre- and postsynaptic neurons in the hippocampus to control the assembly of a precise topographic projection: required in both CA1 and subicular neurons for the precise targeting of proximal CA1 axons to distal subiculum, probably by promoting homophilic cell adhesion. Required by retinal ganglion cells for acquisition of their correct morphological and functional connectivity, thereby playing a key role in the development of the visual pathway. The protein is Teneurin-3 (tenm3) of Danio rerio (Zebrafish).